Here is a 159-residue protein sequence, read N- to C-terminus: U-actitoxin-Avd13b (159 aa).

The N-terminal stretch at 1–18 (MKSIFLVFFAVCLVKAEA) is a signal peptide. The propeptide occupies 19-26 (GKGRKREP). Intrachain disulfides connect Cys33-Cys45 and Cys36-Cys52. Positions 59-60 (EP) are excised as a propeptide. Disulfide bonds link Cys67/Cys79 and Cys70/Cys86. The propeptide occupies 93–94 (EP). 2 disulfide bridges follow: Cys101/Cys113 and Cys104/Cys120. Residues 127–128 (EP) constitute a propeptide that is removed on maturation. 2 disulfide bridges follow: Cys135/Cys147 and Cys138/Cys154.

The protein belongs to the sea anemone BBH family.

The protein localises to the secreted. Its subcellular location is the nematocyst. In terms of biological role, inhibits ion channels. This Anemonia viridis (Snakelocks anemone) protein is U-actitoxin-Avd13b.